The following is a 1234-amino-acid chain: DNA-directed RNA polymerase subunit beta (1234 aa).

This sequence belongs to the RNA polymerase beta chain family. As to quaternary structure, the RNAP catalytic core consists of 2 alpha, 1 beta, 1 beta' and 1 omega subunit. When a sigma factor is associated with the core the holoenzyme is formed, which can initiate transcription.

It catalyses the reaction RNA(n) + a ribonucleoside 5'-triphosphate = RNA(n+1) + diphosphate. In terms of biological role, DNA-dependent RNA polymerase catalyzes the transcription of DNA into RNA using the four ribonucleoside triphosphates as substrates. This chain is DNA-directed RNA polymerase subunit beta, found in Clostridium perfringens (strain SM101 / Type A).